We begin with the raw amino-acid sequence, 596 residues long: Elongation factor 4 (596 aa).

The tr-type G domain maps to 2–183 (ENIRNFCIIA…AIIQRIPPPK (182 aa)). Residues 14 to 19 (DHGKST) and 130 to 133 (NKID) each bind GTP.

Belongs to the TRAFAC class translation factor GTPase superfamily. Classic translation factor GTPase family. LepA subfamily.

Its subcellular location is the cell inner membrane. The enzyme catalyses GTP + H2O = GDP + phosphate + H(+). In terms of biological role, required for accurate and efficient protein synthesis under certain stress conditions. May act as a fidelity factor of the translation reaction, by catalyzing a one-codon backward translocation of tRNAs on improperly translocated ribosomes. Back-translocation proceeds from a post-translocation (POST) complex to a pre-translocation (PRE) complex, thus giving elongation factor G a second chance to translocate the tRNAs correctly. Binds to ribosomes in a GTP-dependent manner. This Cytophaga hutchinsonii (strain ATCC 33406 / DSM 1761 / CIP 103989 / NBRC 15051 / NCIMB 9469 / D465) protein is Elongation factor 4.